Here is a 505-residue protein sequence, read N- to C-terminus: GMP synthase [glutamine-hydrolyzing] (505 aa).

The Glutamine amidotransferase type-1 domain occupies 2–190 (SVVILDFGSQ…FLEICGVARD (189 aa)). The active-site Nucleophile is the cysteine 79. Residues histidine 165 and glutamate 167 contribute to the active site. The 190-residue stretch at 191 to 380 (WNAEHIVDEL…LGLPDAIRMR (190 aa)) folds into the GMPS ATP-PPase domain. 218–224 (SGGVDSS) serves as a coordination point for ATP.

In terms of assembly, homodimer.

It catalyses the reaction XMP + L-glutamine + ATP + H2O = GMP + L-glutamate + AMP + diphosphate + 2 H(+). The protein operates within purine metabolism; GMP biosynthesis; GMP from XMP (L-Gln route): step 1/1. Its function is as follows. Catalyzes the synthesis of GMP from XMP. The protein is GMP synthase [glutamine-hydrolyzing] of Deinococcus geothermalis (strain DSM 11300 / CIP 105573 / AG-3a).